A 949-amino-acid polypeptide reads, in one-letter code: Thrombospondin-4-B (949 aa).

Residues 1-22 (MAGTMHLLTAVSLILMLSSANA) form the signal peptide. One can recognise a Laminin G-like domain in the interval 23–198 (ESTVYNLLTS…LEELKLAYGD (176 aa)). Cystine bridges form between C276-C287, C281-C296, C299-C310, C316-C327, C321-C336, C339-C363, C369-C383, C377-C392, C395-C407, C413-C427, C421-C437, C439-C450, C466-C471, C476-C496, C512-C532, C535-C555, C571-C591, C594-C614, C632-C652, C672-C692, and C708-C929. The EGF-like 1; calcium-binding domain occupies 312–349 (DVDECQFNPCFPGVRCVNMAPGFRCEACPLGFTGKPLE). The 44-residue stretch at 365–408 (DIDECKGPDNGGCTANSICVNSVGSYQCGRCKTGFTGDQIRGCK) folds into the EGF-like 2; calcium-binding domain. The EGF-like 3 domain occupies 409–451 (PEKSCGNRLQNPCDPNAQCTEERDGTITCQCGIGWAGNGYLCG). TSP type-3 repeat units lie at residues 452–484 (KDTD…NSGQ), 485–520 (EDAD…NINQ), 521–543 (QNSD…NPDQ), 544–579 (RDTD…NRDQ), 580–602 (LDRD…NPNQ), 603–640 (SDID…NSSQ), 641–680 (LDTD…NPEQ), and 681–716 (IDDN…EITL). The tract at residues 578 to 671 (DQLDRDGDGV…PDSLPPGPDN (94 aa)) is disordered. N601 and N637 each carry an N-linked (GlcNAc...) asparagine glycan. The span at 649-660 (GDECDDDDDNDG) shows a compositional bias: acidic residues. Positions 720 to 934 (RAYQTVVLDP…LKYRCNDTIP (215 aa)) constitute a TSP C-terminal domain. An N-linked (GlcNAc...) asparagine glycan is attached at N930.

It belongs to the thrombospondin family. As to quaternary structure, homotrimer; disulfide-linked.

The protein localises to the endoplasmic reticulum. It localises to the sarcoplasmic reticulum. It is found in the secreted. The protein resides in the extracellular space. Its subcellular location is the extracellular matrix. Its function is as follows. Adhesive glycoprotein that mediates cell-to-cell and cell-to-matrix interactions and may be involved in various processes including cellular proliferation, migration, adhesion and attachment. May play a role in ER stress response. The polypeptide is Thrombospondin-4-B (thbs4b) (Danio rerio (Zebrafish)).